Reading from the N-terminus, the 438-residue chain is Nucleolar protein 12 (438 aa).

Disordered regions lie at residues 1-28 (MGET…VDPT) and 60-94 (ANGV…LNDS). Residues 60 to 71 (ANGVEEAAETIE) are compositionally biased toward acidic residues. Phosphoserine is present on residues serine 94 and serine 95. The interval 108-146 (AEEDEEKDKDSAGLINDEEDKSPAKQSVLEERTSQEDVK) is disordered. Residues 135-146 (VLEERTSQEDVK) show a composition bias toward basic and acidic residues. 2 RRM domains span residues 164 to 262 (KTVF…SVSH) and 270 to 348 (RCVF…RAKS). 2 stretches are compositionally biased toward basic residues: residues 346 to 357 (AKSTKPKSITRS) and 402 to 412 (AKKKVNKKRKE). 2 disordered regions span residues 346–366 (AKST…KTRT) and 390–438 (EGHR…KKDK).

It belongs to the RRM RBM34 family.

The protein resides in the nucleus. Its subcellular location is the nucleolus. In terms of biological role, involved in pre-25S rRNA processing. This chain is Nucleolar protein 12 (nop12), found in Schizosaccharomyces pombe (strain 972 / ATCC 24843) (Fission yeast).